A 709-amino-acid polypeptide reads, in one-letter code: MFANPVVKSFQYGNHTVTLETGVIARQATAAVMASMDDTSVFVSVVAKKEAVPGQDFFPLTVNYQERTYAAGKIPGGFFKREGRPSEAETLTARLIDRPIRPLFPDAFKNEVQVIATVVSINPEVNPDMITMIGTSAALAIAGIPFNGPIGAARVGHINGELVLNPSNTELENSKLDLVVSGTEGAVLMVESEADNLTEEEMLSAVVFGHDQQQVVIKAINEFAAEVATPAWDWVAPEENTVLNSRIAELAEAKLVEAYQITEKMTRYDRIHEIAAEVNEVLVSENEDVNLKEVHTIFHDLEKTVVRRSIIAGNPRIDGREKDMVRALDVRTGVLPRTHGSSLFTRGETQALVTATLGTQRDAQIIDSLMGEKKDHFLLHYNFPPYCVGETGFVGSPKRREIGHGKLAKRGIQAVMPSIEEFPYTVRVVSEITESNGSSSMASVCGTSLALMDAGVPIKASVAGIAMGLVKEGDDFVVLSDILGDEDHLGDMDFKVAGTNEGITALQMDIKIEGITKEIMQIALNQAQGARKHILKVMDEAISGAREDISEFAPRIHTMKISSDKIKDVIGKGGAVIRALCEETGTTIEIEDDGTIKIAATEGAAAKEAIRRIEEITAEVEVGKIYTGKVMRIVDFGAFVTVLGPKEGLVHISQIAEERIEKVADHLQVGQEVKTKVLEIDRQGRIRLSIKEANAELNPAPAAEAKDAE.

Mg(2+)-binding residues include Asp-487 and Asp-493. The KH domain occupies 554–613 (PRIHTMKISSDKIKDVIGKGGAVIRALCEETGTTIEIEDDGTIKIAATEGAAAKEAIRRI). The S1 motif domain occupies 623-691 (GKIYTGKVMR…RQGRIRLSIK (69 aa)).

Belongs to the polyribonucleotide nucleotidyltransferase family. In terms of assembly, component of the RNA degradosome, which is a multiprotein complex involved in RNA processing and mRNA degradation. It depends on Mg(2+) as a cofactor.

The protein localises to the cytoplasm. It catalyses the reaction RNA(n+1) + phosphate = RNA(n) + a ribonucleoside 5'-diphosphate. Functionally, involved in mRNA degradation. Catalyzes the phosphorolysis of single-stranded polyribonucleotides processively in the 3'- to 5'-direction. This Aliivibrio fischeri (strain MJ11) (Vibrio fischeri) protein is Polyribonucleotide nucleotidyltransferase.